The following is a 225-amino-acid chain: Histone H1.5 (225 aa).

The interval Met-1–Lys-23 is disordered. Ser-2 carries the post-translational modification N-acetylserine. The span at Thr-9 to Ser-19 shows a compositional bias: low complexity. The 77-residue stretch at Ala-37–Val-113 folds into the H15 domain. Basic and acidic residues predominate over residues Lys-145 to Val-156. A disordered region spans residues Lys-145–Ala-225. Over residues Lys-157–Lys-175 the composition is skewed to basic residues. Residues Lys-176 to Ala-208 are compositionally biased toward low complexity.

Belongs to the histone H1/H5 family.

Its subcellular location is the nucleus. It is found in the chromosome. In terms of biological role, histones H1 are necessary for the condensation of nucleosome chains into higher-order structures. The sequence is that of Histone H1.5 (hil-5) from Caenorhabditis elegans.